Here is a 630-residue protein sequence, read N- to C-terminus: Elongation factor 4 (630 aa).

A disordered region spans residues 1 to 22 (MTVARNRAGAGPGKGSPISSFA). One can recognise a tr-type G domain in the interval 30–211 (ARIRNFCIIA…EVVRQVPAPV (182 aa)). GTP is bound by residues 42–47 (DHGKST) and 158–161 (NKID).

The protein belongs to the TRAFAC class translation factor GTPase superfamily. Classic translation factor GTPase family. LepA subfamily.

The protein resides in the cell membrane. The enzyme catalyses GTP + H2O = GDP + phosphate + H(+). Functionally, required for accurate and efficient protein synthesis under certain stress conditions. May act as a fidelity factor of the translation reaction, by catalyzing a one-codon backward translocation of tRNAs on improperly translocated ribosomes. Back-translocation proceeds from a post-translocation (POST) complex to a pre-translocation (PRE) complex, thus giving elongation factor G a second chance to translocate the tRNAs correctly. Binds to ribosomes in a GTP-dependent manner. The protein is Elongation factor 4 of Rhodococcus jostii (strain RHA1).